A 340-amino-acid chain; its full sequence is UDP-3-O-acylglucosamine N-acyltransferase (340 aa).

Residue His-238 is the Proton acceptor of the active site.

It belongs to the transferase hexapeptide repeat family. LpxD subfamily. In terms of assembly, homotrimer.

It catalyses the reaction a UDP-3-O-[(3R)-3-hydroxyacyl]-alpha-D-glucosamine + a (3R)-hydroxyacyl-[ACP] = a UDP-2-N,3-O-bis[(3R)-3-hydroxyacyl]-alpha-D-glucosamine + holo-[ACP] + H(+). Its pathway is bacterial outer membrane biogenesis; LPS lipid A biosynthesis. Catalyzes the N-acylation of UDP-3-O-acylglucosamine using 3-hydroxyacyl-ACP as the acyl donor. Is involved in the biosynthesis of lipid A, a phosphorylated glycolipid that anchors the lipopolysaccharide to the outer membrane of the cell. This chain is UDP-3-O-acylglucosamine N-acyltransferase, found in Shewanella denitrificans (strain OS217 / ATCC BAA-1090 / DSM 15013).